A 119-amino-acid polypeptide reads, in one-letter code: Large ribosomal subunit protein bL20 (119 aa).

It belongs to the bacterial ribosomal protein bL20 family.

Binds directly to 23S ribosomal RNA and is necessary for the in vitro assembly process of the 50S ribosomal subunit. It is not involved in the protein synthesizing functions of that subunit. In Bradyrhizobium sp. (strain ORS 278), this protein is Large ribosomal subunit protein bL20.